A 90-amino-acid polypeptide reads, in one-letter code: MKLLGFFLSWVSVCAIVSASEEGHIYCGRYLAYKMADLCWRAGFEKRSVAHYAGYGWPLLPSLSEERGKRGIADECCLQPCTNDVLLSYC.

Residues Met-1–Ser-18 form the signal peptide. 3 cysteine pairs are disulfide-bonded: Cys-27–Cys-77, Cys-39–Cys-90, and Cys-76–Cys-81. Residues Ser-48–Gly-68 constitute a propeptide, c peptide like.

The protein belongs to the insulin family. As to quaternary structure, heterodimer of a B chain and an A chain linked by two disulfide bonds.

It is found in the secreted. In terms of biological role, brain peptide responsible for activation of prothoracic glands to produce ecdysone in insects. This Bombyx mori (Silk moth) protein is Bombyxin D-1 (BBXD1).